The following is a 439-amino-acid chain: GTPase Obg (439 aa).

Positions 5 to 164 (TDFFDQATIV…LTLELELKML (160 aa)) constitute an Obg domain. The OBG-type G domain occupies 165-335 (ADVGLVGFPN…LLQRVAELLR (171 aa)). Residues 171-178 (GFPNAGKS), 196-200 (FTTLT), 217-220 (DIPG), 287-290 (NKAD), and 316-318 (SAA) contribute to the GTP site. The Mg(2+) site is built by Ser178 and Thr198. Residues 337 to 359 (DPPPQRDPVDPDEPPLEWPLPPV) form a disordered region. An OCT domain is found at 356–433 (LPPVDENAFT…IGRAELVWDD (78 aa)).

Belongs to the TRAFAC class OBG-HflX-like GTPase superfamily. OBG GTPase family. As to quaternary structure, monomer. Mg(2+) is required as a cofactor.

It is found in the cytoplasm. An essential GTPase which binds GTP, GDP and possibly (p)ppGpp with moderate affinity, with high nucleotide exchange rates and a fairly low GTP hydrolysis rate. Plays a role in control of the cell cycle, stress response, ribosome biogenesis and in those bacteria that undergo differentiation, in morphogenesis control. The sequence is that of GTPase Obg from Chloroflexus aggregans (strain MD-66 / DSM 9485).